The sequence spans 178 residues: NADPH azoreductase (178 aa).

106-111 (GGGKGG) contacts NADP(+).

It belongs to the azoreductase type 2 family. Monomer.

It carries out the reaction N,N-dimethyl-1,4-phenylenediamine + aniline + 2 NADP(+) = 4-(dimethylamino)azobenzene + 2 NADPH + 2 H(+). In terms of biological role, catalyzes the reductive cleavage of azo bond in aromatic azo compounds to the corresponding amines. Requires NADPH as an electron donor for its activity. Compounds with paired naphthalene groups coupled with the azo group are good substrates, with the following preference order: Rocceline &gt; Sumifix Black B &gt; Solar Orange. In Bacillus sp. (strain OY1-2), this protein is NADPH azoreductase (azr).